Reading from the N-terminus, the 177-residue chain is Coatomer subunit zeta-1 (177 aa).

It belongs to the adaptor complexes small subunit family. In terms of assembly, oligomeric complex that consists of at least the alpha, beta, beta', gamma, delta, epsilon and zeta subunits.

Its subcellular location is the cytoplasm. It localises to the golgi apparatus membrane. The protein resides in the cytoplasmic vesicle. The protein localises to the COPI-coated vesicle membrane. Functionally, the coatomer is a cytosolic protein complex that binds to dilysine motifs and reversibly associates with Golgi non-clathrin-coated vesicles, which further mediate biosynthetic protein transport from the ER, via the Golgi up to the trans Golgi network. Coatomer complex is required for budding from Golgi membranes, and is essential for the retrograde Golgi-to-ER transport of dilysine-tagged proteins. The zeta subunit may be involved in regulating the coat assembly and, hence, the rate of biosynthetic protein transport due to its association-dissociation properties with the coatomer complex. The protein is Coatomer subunit zeta-1 (COPZ1) of Oryza sativa subsp. japonica (Rice).